The following is a 1041-amino-acid chain: DNA polymerase catalytic subunit (1041 aa).

Positions 1 to 23 (MAFFNPYFKSKNKGSDMPPKQSM) are disordered.

This sequence belongs to the DNA polymerase type-B family.

It is found in the host nucleus. It carries out the reaction DNA(n) + a 2'-deoxyribonucleoside 5'-triphosphate = DNA(n+1) + diphosphate. The enzyme catalyses Endonucleolytic cleavage to 5'-phosphomonoester.. Its function is as follows. Replicates viral genomic DNA. The replication complex is composed of six viral proteins: the DNA polymerase, processivity factor, primase, primase-associated factor, helicase, and ssDNA-binding protein. Additionally, the polymerase contains an intrinsic ribonuclease H (RNase H) activity that specifically degrades RNA/DNA heteroduplexes or duplex DNA substrates in the 5' to 3' direction. Therefore, it can catalyze the excision of the RNA primers that initiate the synthesis of Okazaki fragments at a replication fork during viral DNA replication. This chain is DNA polymerase catalytic subunit, found in Elephantid herpesvirus 1 (isolate Asian elephant/Berlin/Kiba/1998) (EIHV-1).